The sequence spans 206 residues: Small ribosomal subunit protein uS4 (206 aa).

Positions 96–156 (GRLDNVVYRM…EKAKKQSRVK (61 aa)) constitute an S4 RNA-binding domain.

This sequence belongs to the universal ribosomal protein uS4 family. As to quaternary structure, part of the 30S ribosomal subunit. Contacts protein S5. The interaction surface between S4 and S5 is involved in control of translational fidelity.

Its function is as follows. One of the primary rRNA binding proteins, it binds directly to 16S rRNA where it nucleates assembly of the body of the 30S subunit. In terms of biological role, with S5 and S12 plays an important role in translational accuracy. This chain is Small ribosomal subunit protein uS4, found in Shigella flexneri.